The following is a 218-amino-acid chain: Small ribosomal subunit protein uS3c (218 aa).

The 72-residue stretch at 47-118 (VQKNIRISSG…KLNIAITRIS (72 aa)) folds into the KH type-2 domain.

Belongs to the universal ribosomal protein uS3 family. As to quaternary structure, part of the 30S ribosomal subunit.

The protein resides in the plastid. It localises to the chloroplast. In Aethionema cordifolium (Lebanon stonecress), this protein is Small ribosomal subunit protein uS3c (rps3).